A 107-amino-acid polypeptide reads, in one-letter code: Large ribosomal subunit protein uL24 (107 aa).

Belongs to the universal ribosomal protein uL24 family. In terms of assembly, part of the 50S ribosomal subunit.

One of two assembly initiator proteins, it binds directly to the 5'-end of the 23S rRNA, where it nucleates assembly of the 50S subunit. Functionally, one of the proteins that surrounds the polypeptide exit tunnel on the outside of the subunit. In Thiobacillus denitrificans (strain ATCC 25259 / T1), this protein is Large ribosomal subunit protein uL24.